The sequence spans 370 residues: MSMNSYGHLFRVTTWGESHGPALGATVDGCPPGIDVDAAAIQHWLDRRKPGQNKYTTQRREADEVEILSGVYEGQSTGTPIQLMIRNTDQRSKDYGDIAEKFRPGHADITYWQKYGIRDPRGGGRSSARETAARVAAGGVARLALAALVPAVKITGYMVQMGPHGIDRECFDLAQVDENPFWVPDAKAADEWAAYLDGLRKSGDSVGAVIEVRASGLPAGLGAPIYGKLDTDLAAAMMSINAVKGVEIGDGMAAAALTGSANADEIHMGDNGPEYSSNHAGGILGGISTGQDVIVRFAVKPTSSILTPRATITKAGTPAEIITKGRHDPCVGIRAVPVGEAMMACVVLDHILLQRGQIGGKVGETRGKIG.

Arginine 48 serves as a coordination point for NADP(+). Residues 125–127, 241–242, glycine 285, 300–304, and arginine 326 contribute to the FMN site; these read RSS, NA, and KPTSS.

Belongs to the chorismate synthase family. As to quaternary structure, homotetramer. The cofactor is FMNH2.

It catalyses the reaction 5-O-(1-carboxyvinyl)-3-phosphoshikimate = chorismate + phosphate. It participates in metabolic intermediate biosynthesis; chorismate biosynthesis; chorismate from D-erythrose 4-phosphate and phosphoenolpyruvate: step 7/7. Functionally, catalyzes the anti-1,4-elimination of the C-3 phosphate and the C-6 proR hydrogen from 5-enolpyruvylshikimate-3-phosphate (EPSP) to yield chorismate, which is the branch point compound that serves as the starting substrate for the three terminal pathways of aromatic amino acid biosynthesis. This reaction introduces a second double bond into the aromatic ring system. The sequence is that of Chorismate synthase from Jannaschia sp. (strain CCS1).